The following is a 105-amino-acid chain: Delta-hexatoxin-Mg1a (105 aa).

The signal sequence occupies residues 1–18 (MKTLVIACVALVLVVVHG). A propeptide spanning residues 19-60 (EVIEEVNEKQLQESVEEKYSLLQRLEKLDEAITAEENRNSRV) is cleaved from the precursor. 4 disulfides stabilise this stretch: C63-C77, C70-C82, C76-C93, and C78-C105.

The protein belongs to the neurotoxin 06 (delta-actx) family. In terms of tissue distribution, expressed by the venom gland.

The protein localises to the secreted. In terms of biological role, selectively slows channel inactivation of mammalian Nav1.1/SCN1A, Nav1.3/SCN3A, and Nav1.6/SCN8A and shows higher affinity for insect Nav1/para channels (site 3). Induces tonic repetitive firing of nerve impulses in insect neurons accompanied by plateau potentials. The protein is Delta-hexatoxin-Mg1a of Macrothele gigas (Japanese funnel web spider).